We begin with the raw amino-acid sequence, 509 residues long: Putative ATP-dependent RNA helicase QP509L (509 aa).

One can recognise a Helicase ATP-binding domain in the interval 110–262 (KKLLSPYGRF…KIILHHLGQP (153 aa)). 123–130 (LNTGLGKT) lines the ATP pocket. Residues 215–218 (DEAH) carry the DEAH box motif.

It belongs to the DEAD box helicase family. DEAH subfamily.

The catalysed reaction is ATP + H2O = ADP + phosphate + H(+). The protein is Putative ATP-dependent RNA helicase QP509L of Ornithodoros (relapsing fever ticks).